Consider the following 213-residue polypeptide: GTP-binding protein yptV4 (213 aa).

13–21 (GDTGVGKSC) is a binding site for GTP. An Effector region motif is present at residues 35 to 43 (HDLTIGVEF). GTP-binding positions include 61–65 (DTAGQ), 119–122 (NKCD), and 149–151 (SAR). The segment at 194-213 (AGPQAAKPGEGDARKSSSCC) is disordered. The segment covering 202-213 (GEGDARKSSSCC) has biased composition (basic and acidic residues). Residues cysteine 212 and cysteine 213 are each lipidated (S-geranylgeranyl cysteine).

The protein belongs to the small GTPase superfamily. Rab family.

The protein localises to the cell membrane. Its function is as follows. Protein transport. Probably involved in vesicular traffic. The sequence is that of GTP-binding protein yptV4 (YPTV4) from Volvox carteri (Green alga).